A 63-amino-acid polypeptide reads, in one-letter code: Large ribosomal subunit protein uL30 (63 aa).

This sequence belongs to the universal ribosomal protein uL30 family. In terms of assembly, part of the 50S ribosomal subunit.

The sequence is that of Large ribosomal subunit protein uL30 from Xanthomonas axonopodis pv. citri (strain 306).